The following is an 854-amino-acid chain: Putative Tricorn-like protease C-terminal subunit (854 aa).

H539 functions as the Charge relay system in the catalytic mechanism. Positions 554–646 (PIGGLGADYE…RVTVKLLKDE (93 aa)) are PDZ-like. G709 is a substrate binding site. The active-site Nucleophile is the S756. Residue E814 is the Charge relay system of the active site.

Belongs to the peptidase S41B family.

The protein resides in the cytoplasm. Functionally, degrades oligopeptides in a sequential manner. The protein is Putative Tricorn-like protease C-terminal subunit (triC) of Sulfurisphaera tokodaii (strain DSM 16993 / JCM 10545 / NBRC 100140 / 7) (Sulfolobus tokodaii).